Here is a 637-residue protein sequence, read N- to C-terminus: Sec1 family domain-containing protein 1 (637 aa).

Residues S32, S298, and S523 each carry the phosphoserine modification.

This sequence belongs to the STXBP/unc-18/SEC1 family. In terms of assembly, interacts with STX17. Interacts with the COG complex via COG4. Interacts with STX5A. As to expression, highly expressed in testis. Detected at lower levels in brain, astrocytes, heart and small intestine.

It is found in the cytoplasm. It localises to the endoplasmic reticulum membrane. Its subcellular location is the golgi apparatus. The protein resides in the golgi stack membrane. Its function is as follows. Plays a role in SNARE-pin assembly and Golgi-to-ER retrograde transport via its interaction with COG4. Involved in vesicular transport between the endoplasmic reticulum and the Golgi. The sequence is that of Sec1 family domain-containing protein 1 (Scfd1) from Rattus norvegicus (Rat).